The chain runs to 229 residues: Potassium/proton antiporter CemA (229 aa).

The next 4 helical transmembrane spans lie at 7–27 (FNPL…SFSF), 107–127 (ILNF…YILG), 154–174 (ILLL…ELMI), and 189–209 (IISG…KYLI).

Belongs to the CemA family.

It is found in the plastid. Its subcellular location is the chloroplast inner membrane. The catalysed reaction is K(+)(in) + H(+)(out) = K(+)(out) + H(+)(in). Contributes to K(+)/H(+) antiport activity by supporting proton efflux to control proton extrusion and homeostasis in chloroplasts in a light-dependent manner to modulate photosynthesis. Prevents excessive induction of non-photochemical quenching (NPQ) under continuous-light conditions. Indirectly promotes efficient inorganic carbon uptake into chloroplasts. This Ranunculus macranthus (Large buttercup) protein is Potassium/proton antiporter CemA.